We begin with the raw amino-acid sequence, 202 residues long: N-(5'-phosphoribosyl)anthranilate isomerase (202 aa).

Belongs to the TrpF family.

The catalysed reaction is N-(5-phospho-beta-D-ribosyl)anthranilate = 1-(2-carboxyphenylamino)-1-deoxy-D-ribulose 5-phosphate. Its pathway is amino-acid biosynthesis; L-tryptophan biosynthesis; L-tryptophan from chorismate: step 3/5. The polypeptide is N-(5'-phosphoribosyl)anthranilate isomerase (Listeria monocytogenes serovar 1/2a (strain ATCC BAA-679 / EGD-e)).